Consider the following 249-residue polypeptide: Triosephosphate isomerase (249 aa).

9–11 (NWK) is a substrate binding site. Catalysis depends on His91, which acts as the Electrophile. The active-site Proton acceptor is the Glu163. Substrate contacts are provided by residues Gly169, Ser209, and 230 to 231 (GG).

The protein belongs to the triosephosphate isomerase family. As to quaternary structure, homodimer.

It localises to the cytoplasm. It catalyses the reaction D-glyceraldehyde 3-phosphate = dihydroxyacetone phosphate. Its pathway is carbohydrate biosynthesis; gluconeogenesis. It functions in the pathway carbohydrate degradation; glycolysis; D-glyceraldehyde 3-phosphate from glycerone phosphate: step 1/1. Involved in the gluconeogenesis. Catalyzes stereospecifically the conversion of dihydroxyacetone phosphate (DHAP) to D-glyceraldehyde-3-phosphate (G3P). The sequence is that of Triosephosphate isomerase from Halorhodospira halophila (strain DSM 244 / SL1) (Ectothiorhodospira halophila (strain DSM 244 / SL1)).